We begin with the raw amino-acid sequence, 365 residues long: Ribosomal RNA large subunit methyltransferase F (365 aa).

The disordered stretch occupies residues 1–50 (MSKPAVKSVPSATAKTATRAVNIRQKVKAPKQAKPEAKGRAKPSKDKPRA). A compositionally biased stretch (basic and acidic residues) spans 33–50 (AKPEAKGRAKPSKDKPRA).

It belongs to the methyltransferase superfamily. METTL16/RlmF family.

The protein resides in the cytoplasm. The catalysed reaction is adenosine(1618) in 23S rRNA + S-adenosyl-L-methionine = N(6)-methyladenosine(1618) in 23S rRNA + S-adenosyl-L-homocysteine + H(+). Specifically methylates the adenine in position 1618 of 23S rRNA. The polypeptide is Ribosomal RNA large subunit methyltransferase F (Shewanella baltica (strain OS155 / ATCC BAA-1091)).